Reading from the N-terminus, the 357-residue chain is Glucose-6-phosphatase catalytic subunit 1 (357 aa).

Residues 1 to 28 (MEEGMNILHDFGIQSTRYLQVNYQDSQD) are Lumenal-facing. A helical membrane pass occupies residues 29-49 (WFILVSVIADLRNAFYVLFPI). The Cytoplasmic portion of the chain corresponds to 50–60 (WFHLKETVGIN). The helical transmembrane segment at 61 to 81 (LLWVAVVGDWFNLVFKWILFG) threads the bilayer. The Lumenal portion of the chain corresponds to 82–117 (QRPYWWVLDTDYYSNSSVPIIKQFPVTCETGPGSPS). Substrate is bound at residue Arg83. A glycan (N-linked (GlcNAc...) asparagine) is linked at Asn96. A helical membrane pass occupies residues 118–138 (GHAMGAAGVYYVMVTSTLAIF). His119 functions as the Proton donor in the catalytic mechanism. Over 139–147 (RGKKKPTYG) the chain is Cytoplasmic. Residues 148-168 (FRCLNVILWLGFWAVQLNVCL) form a helical membrane-spanning segment. At 169–179 (SRIYLAAHFPH) the chain is on the lumenal side. Residue Arg170 participates in substrate binding. The Nucleophile role is filled by His176. A helical transmembrane segment spans residues 180–202 (QVVAGVLSGIAVAETFSHIRGIY). Residues 203-211 (NASLRKYCL) are Cytoplasmic-facing. A helical transmembrane segment spans residues 212–232 (ITIFLFGFALGFYLLLKGLGV). At 233-254 (DLLWTLEKAKRWCERPEWVHLD) the chain is on the lumenal side. A helical membrane pass occupies residues 255-275 (TTPFASLFKNLGTLLGLGLAL). The Cytoplasmic portion of the chain corresponds to 276-291 (NSSMYRKSCKGELSKL). Residues 292–312 (LPFRFACIVASLVLLHLFDSL) traverse the membrane as a helical segment. Over 313–320 (KPPSQVEL) the chain is Lumenal. A helical transmembrane segment spans residues 321 to 341 (IFYILSFCKSATVPFASVSLI). Over 342-357 (PYCLARILGQTHKKSL) the chain is Cytoplasmic. Positions 354-357 (KKSL) match the Prevents secretion from ER motif.

The protein belongs to the glucose-6-phosphatase family. In terms of tissue distribution, liver and kidney.

It localises to the endoplasmic reticulum membrane. The catalysed reaction is D-glucose 6-phosphate + H2O = D-glucose + phosphate. The protein operates within carbohydrate biosynthesis; gluconeogenesis. Its function is as follows. Hydrolyzes glucose-6-phosphate to glucose in the endoplasmic reticulum. Forms with the glucose-6-phosphate transporter (SLC37A4/G6PT) the complex responsible for glucose production in the terminal step of glycogenolysis and gluconeogenesis. Hence, it is the key enzyme in homeostatic regulation of blood glucose levels. The sequence is that of Glucose-6-phosphatase catalytic subunit 1 (G6pc1) from Mus musculus (Mouse).